A 283-amino-acid polypeptide reads, in one-letter code: 4-diphosphocytidyl-2-C-methyl-D-erythritol kinase (283 aa).

Residue lysine 10 is part of the active site. 99 to 109 (PMGGGLGGGSS) is a binding site for ATP. The active site involves aspartate 141.

Belongs to the GHMP kinase family. IspE subfamily. As to quaternary structure, homodimer.

It carries out the reaction 4-CDP-2-C-methyl-D-erythritol + ATP = 4-CDP-2-C-methyl-D-erythritol 2-phosphate + ADP + H(+). The protein operates within isoprenoid biosynthesis; isopentenyl diphosphate biosynthesis via DXP pathway; isopentenyl diphosphate from 1-deoxy-D-xylulose 5-phosphate: step 3/6. Its function is as follows. Catalyzes the phosphorylation of the position 2 hydroxy group of 4-diphosphocytidyl-2C-methyl-D-erythritol. This chain is 4-diphosphocytidyl-2-C-methyl-D-erythritol kinase, found in Salmonella arizonae (strain ATCC BAA-731 / CDC346-86 / RSK2980).